A 158-amino-acid polypeptide reads, in one-letter code: NAD(P)H-quinone oxidoreductase subunit J, chloroplastic (158 aa).

This sequence belongs to the complex I 30 kDa subunit family. As to quaternary structure, NDH is composed of at least 16 different subunits, 5 of which are encoded in the nucleus.

Its subcellular location is the plastid. The protein resides in the chloroplast thylakoid membrane. The catalysed reaction is a plastoquinone + NADH + (n+1) H(+)(in) = a plastoquinol + NAD(+) + n H(+)(out). It catalyses the reaction a plastoquinone + NADPH + (n+1) H(+)(in) = a plastoquinol + NADP(+) + n H(+)(out). Its function is as follows. NDH shuttles electrons from NAD(P)H:plastoquinone, via FMN and iron-sulfur (Fe-S) centers, to quinones in the photosynthetic chain and possibly in a chloroplast respiratory chain. The immediate electron acceptor for the enzyme in this species is believed to be plastoquinone. Couples the redox reaction to proton translocation, and thus conserves the redox energy in a proton gradient. This Buxus microphylla (Littleleaf boxwood) protein is NAD(P)H-quinone oxidoreductase subunit J, chloroplastic.